Reading from the N-terminus, the 521-residue chain is MLKQKKFFISTPIYYSSGNPHIGHAYTTIIADVLARYKRLFGYDVFFLTGMDEHGQKIQQKAFEENISPKALVDRNSIIFLNLWKRLNISFSKFIRTTQMDHEESVQKVFSYLYKQGKIYLGQWTGYYCVSCEENYNPAEIIKSQDNIMLCRMGHKLETKSEESYFYKMSDQAPFLKTYYQNHPNFIIPNERANEMVNNFLNNLEDLSISRTTFDWGIPIAENPKHVIYVWLDALMNYLTATGYLSNNEELFQKYWCDNETEIVHLLSKEIARFHCIYWPIFLNDLQIRFPSTILSHGWIITKEGKMSKSLGNVIDPNVLIDTYGVDALRYYLMADLSLFRDAIFSEDNLIETYNTQLANSYGNMISRTLGMLKKYRNNIVPKYVGCVLKNDEKLENLINKNIELVQENINKYSIDKALNCIQEILVEANKYIEDNKPWELAKNQQEQELDSLLVHLVKVIQVTTTLLSPILIEGSKKAVEQLNFDESFLTLASLASYDIFNYHKVNDSKPIFARIIVEKQ.

The 'HIGH' region motif lies at 14–24; that stretch reads YYSSGNPHIGH. Residues Cys129, Cys132, Cys151, and His155 each contribute to the Zn(2+) site. The 'KMSKS' region motif lies at 306–310; the sequence is KMSKS. Lys309 contributes to the ATP binding site.

Belongs to the class-I aminoacyl-tRNA synthetase family. MetG type 2A subfamily. As to quaternary structure, monomer. Zn(2+) serves as cofactor.

It localises to the cytoplasm. It carries out the reaction tRNA(Met) + L-methionine + ATP = L-methionyl-tRNA(Met) + AMP + diphosphate. Functionally, is required not only for elongation of protein synthesis but also for the initiation of all mRNA translation through initiator tRNA(fMet) aminoacylation. The chain is Methionine--tRNA ligase from Ureaplasma parvum serovar 3 (strain ATCC 700970).